Reading from the N-terminus, the 754-residue chain is Elongation factor G-1, mitochondrial (754 aa).

Residues 1–17 (MARFPTSPAPNRLLRLF) constitute a mitochondrion transit peptide. A tr-type G domain is found at 63–340 (DKLRNIGISA…GVVSFLPSPN (278 aa)). Residues 72–79 (AHIDSGKT), 139–143 (DTPGH), and 193–196 (NKLD) contribute to the GTP site.

This sequence belongs to the TRAFAC class translation factor GTPase superfamily. Classic translation factor GTPase family. EF-G/EF-2 subfamily. As to expression, expressed in cotyledons and adult leaves at the same levels.

Its subcellular location is the mitochondrion. It participates in protein biosynthesis; polypeptide chain elongation. In terms of biological role, mitochondrial GTPase that catalyzes the GTP-dependent ribosomal translocation step during translation elongation. During this step, the ribosome changes from the pre-translocational (PRE) to the post-translocational (POST) state as the newly formed A-site-bound peptidyl-tRNA and P-site-bound deacylated tRNA move to the P and E sites, respectively. Catalyzes the coordinated movement of the two tRNA molecules, the mRNA and conformational changes in the ribosome. The sequence is that of Elongation factor G-1, mitochondrial (MEFG1) from Arabidopsis thaliana (Mouse-ear cress).